We begin with the raw amino-acid sequence, 168 residues long: Photosystem I assembly protein Ycf3 (168 aa).

TPR repeat units follow at residues 35–68 (AFTYYRDGISAQSEGNYAEALQNYYEAMRLEIDP), 72–105 (SYILYNIGLIHTSNGEHTKALEYYFRALERNSFL), and 120–153 (GEQAIRQGDSEIAEAWFDQAAEYWKQAIALTPGN).

This sequence belongs to the Ycf3 family.

It is found in the plastid. It localises to the chloroplast thylakoid membrane. Essential for the assembly of the photosystem I (PSI) complex. May act as a chaperone-like factor to guide the assembly of the PSI subunits. The chain is Photosystem I assembly protein Ycf3 from Jasminum nudiflorum (Winter jasmine).